The primary structure comprises 781 residues: Protein translocase subunit SecA 2 (781 aa).

Residues glutamine 85, 103-107, and aspartate 491 contribute to the ATP site; that span reads GEGKT.

It belongs to the SecA family. In terms of assembly, monomer and homodimer. Part of the essential Sec protein translocation apparatus which comprises SecA, SecYEG and auxiliary proteins SecDF. Other proteins may also be involved.

The protein resides in the cell membrane. Its subcellular location is the cytoplasm. It carries out the reaction ATP + H2O + cellular proteinSide 1 = ADP + phosphate + cellular proteinSide 2.. In terms of biological role, part of the Sec protein translocase complex. Interacts with the SecYEG preprotein conducting channel. Has a central role in coupling the hydrolysis of ATP to the transfer of proteins into and across the cell membrane, serving as an ATP-driven molecular motor driving the stepwise translocation of polypeptide chains across the membrane. The chain is Protein translocase subunit SecA 2 from Clostridioides difficile (strain 630) (Peptoclostridium difficile).